Reading from the N-terminus, the 1353-residue chain is Protein prickle (1353 aa).

3 disordered regions span residues 130–206, 266–292, and 500–540; these read VDDG…TKRN, QEEE…PPLP, and AKYS…SAHA. Low complexity predominate over residues 147 to 165; the sequence is TPTATATAGRPLFPLSSSP. A compositionally biased stretch (basic residues) spans 166 to 178; sequence RRSKKLLRSLRAH. Over residues 179-189 the composition is skewed to basic and acidic residues; that stretch reads VKGESRPEKPA. Low complexity predominate over residues 514-532; the sequence is LSPALSTPSPPSLLHHPAA. Positions 548-656 constitute a PET domain; it reads MDMQRQSHSD…NVRQLMSARP (109 aa). 3 LIM zinc-binding domains span residues 655–719, 720–780, and 781–843; these read RPCD…ETLK, PRCS…MFAE, and YCDY…GEPP. 3 disordered regions span residues 840–892, 933–962, and 1062–1303; these read GEPP…HQAS, HCRS…NMSP, and ADIM…SSSS. Residues 861–892 show a composition bias toward low complexity; the sequence is TQRVRPQTRITSSHASSSPPMSPQQQQQHQAS. 2 stretches are compositionally biased toward polar residues: residues 952-962 and 1111-1120; these read RASSTSHNMSP and SLNTPLSAHS. Over residues 1130-1142 the composition is skewed to low complexity; that stretch reads SILSGASSSSPMS. Basic and acidic residues predominate over residues 1177 to 1205; that stretch reads GDKDRDRDRERDRDRDRDKGGDKDRESGR. Composition is skewed to basic residues over residues 1207–1220 and 1228–1240; these read GPGH…RRKS and NHHR…RSHS. Over residues 1269-1284 the composition is skewed to basic and acidic residues; it reads ETAHKSPRQQRERERE.

The protein belongs to the prickle / espinas / testin family. As to quaternary structure, interacts with dsh; PET and LIM domains interact with dsh DEP domain, in wing cells. Interacts with Vang in photoreceptor cells.

It localises to the cell membrane. Its function is as follows. Acts in a planar cell polarity (PCP) complex; polarization along the apical/basal axis of epithelial cells. PCP signaling in the wing disk requires the receptor fz and the cytoplasmic proteins dsh and pk. These act in a feedback loop leading to activation of the jnk cascade and subsequent polarized arrangement of hairs and bristles. Dgo and pk compete with one another for dsh binding, thereby modulating fz dsh activity and ensuring tight control over fz PCP signaling. Vang, stan and pk function together to regulate the establishment of tissue polarity in the adult eye. The sequence is that of Protein prickle from Drosophila pseudoobscura pseudoobscura (Fruit fly).